The following is a 1021-amino-acid chain: METGQRTSRKVRKLGSNRRRQTREPADGEGAAVAPEPESWSSQAAAELQAFFQDCGAKERGFVTREDLAVAKFSFLGSKEESEMIFDWVDVERKGHLSLEEFSSGLKNIFGSSQSPHRLRRRKPLPSKRVSATTSFPALEEADAEEKEAFLAFMEQLGTGHLLPKQMEIWQLWGQLRQEEPQLAGNLAGFLAKMTSRLQEAQADKEALELTLRKRDSDHHREVQQLYEEMEQQIRQEKQQLQAESDSRGLALTSQMQDVLEAKEREVQRLAEGQRELEAQLSHLRSTHQEAASENQQLQEAKRDLAGRLEEVRGQLQVTRGRLDAARGRVSWQVEEKLSFPGAGEKTPDPQAASPEEAPLPGLFGDNDDWDQLLSNFGSPPHGALQLCWSPPPTPRATSGPQTPRVVRQISISEPQAFLFGQEPSSDPDGAPRTPPGVTFSAKDNKGVDPHEQDIRAEQPVEPHDPDPNQEPGSTPEGRLLWGLSGSLVAPAFKVLIPLEDGPPPPANSPPPQAPAGSSKQIQASDPDDKGPGSWAPPSGAQPGAGAGPQEPTQTPPTMTERETQPGPSPTTALTGVGPAKPPRQRDALQQDLHATGSEPRLGTQRARALTLGPAEPFQGLEFVGPVPTERLEQGQAGPAVQEGLPEGLREAHGQVLGLGELSAFPHQELEEEPRSEEGKQEGRGGQDLSSEQSEQSVEAHGLETAHSELPQQDSLLVSLPSATPQAQVEAEGPTPGKSAPPRGSPPRGAQPGAGAGPQEPTQTPPTMAEQEAQPRPSLTTAHAEEQGPPHSREPRAESRLEDPGMDSREAGLTPSPGDPMAGGGPQANPDYLFHVIFLGDSNVGKTSFLHLLHQNSFATGLTATVGVDFRVKTLLVDNKCFVLQLWDTAGQERYHSMTRQLLRKADGVVLMYDITSQESFAHVRYWLDCLQDAGSDGVVILLLGNKMDCEEERQVSVEAGQQLAQELGVYFGECSAALGHNILEPVVNLARSLRMQEEGLKDSLVKVAPKRPPKRFGCCS.

A disordered region spans residues 1–40; sequence METGQRTSRKVRKLGSNRRRQTREPADGEGAAVAPEPESW. Over residues 7 to 21 the composition is skewed to basic residues; that stretch reads TSRKVRKLGSNRRRQ. An EF-hand domain is found at 77–112; that stretch reads GSKEESEMIFDWVDVERKGHLSLEEFSSGLKNIFGS. The segment at 113 to 133 is disordered; sequence SQSPHRLRRRKPLPSKRVSAT. Over residues 117 to 126 the composition is skewed to basic residues; it reads HRLRRRKPLP. Residues 191–315 are a coiled coil; that stretch reads LAKMTSRLQE…AGRLEEVRGQ (125 aa). 3 disordered regions span residues 339 to 405, 419 to 483, and 495 to 827; these read SFPG…QTPR, LFGQ…LLWG, and VLIP…GGPQ. Positions 443–467 are enriched in basic and acidic residues; sequence KDNKGVDPHEQDIRAEQPVEPHDPD. The segment covering 501-514 has biased composition (pro residues); the sequence is DGPPPPANSPPPQA. Positions 532–559 are enriched in low complexity; it reads PGSWAPPSGAQPGAGAGPQEPTQTPPTM. Basic and acidic residues predominate over residues 676-685; that stretch reads SEEGKQEGRG. Polar residues-rich tracts occupy residues 688–697 and 710–727; these read DLSSEQSEQS and LPQQDSLLVSLPSATPQA. The segment covering 736 to 759 has biased composition (low complexity); that stretch reads PGKSAPPRGSPPRGAQPGAGAGPQ. Residues 783–810 show a composition bias toward basic and acidic residues; sequence HAEEQGPPHSREPRAESRLEDPGMDSRE. GTP contacts are provided by residues 840-847, 888-892, and 946-949; these read GDSNVGKT, DTAGQ, and NKMD. Residues Cys-1019 and Cys-1020 are each lipidated (S-geranylgeranyl cysteine).

It belongs to the small GTPase superfamily. Rab family.

The protein resides in the cell membrane. This is Ras-related protein Rab-44 (RAB44) from Homo sapiens (Human).